Consider the following 150-residue polypeptide: Large ribosomal subunit protein bL9 (150 aa).

This sequence belongs to the bacterial ribosomal protein bL9 family.

Functionally, binds to the 23S rRNA. This chain is Large ribosomal subunit protein bL9, found in Thioalkalivibrio sulfidiphilus (strain HL-EbGR7).